A 129-amino-acid polypeptide reads, in one-letter code: uncharacterized protein (129 aa).

It localises to the cytoplasm. The protein localises to the cytosol. Its subcellular location is the nucleus. This is an uncharacterized protein from Schizosaccharomyces pombe (strain 972 / ATCC 24843) (Fission yeast).